A 211-amino-acid polypeptide reads, in one-letter code: LexA repressor (211 aa).

The segment at residues 27–47 (QTEIARAFGFKGVRAVQHHLD) is a DNA-binding region (H-T-H motif). Catalysis depends on for autocatalytic cleavage activity residues serine 131 and lysine 168.

The protein belongs to the peptidase S24 family. As to quaternary structure, homodimer.

The catalysed reaction is Hydrolysis of Ala-|-Gly bond in repressor LexA.. Functionally, represses a number of genes involved in the response to DNA damage (SOS response), including recA and lexA. In the presence of single-stranded DNA, RecA interacts with LexA causing an autocatalytic cleavage which disrupts the DNA-binding part of LexA, leading to derepression of the SOS regulon and eventually DNA repair. In Xylella fastidiosa (strain 9a5c), this protein is LexA repressor.